Consider the following 574-residue polypeptide: Secreted lipase 1 (574 aa).

The first 17 residues, 1–17 (MKLSLVPIFALLSTAFA), serve as a signal peptide directing secretion. A disulfide bridge links cysteine 95 with cysteine 132. The Acyl-ester intermediate role is filled by serine 244. Cysteine 303 and cysteine 312 form a disulfide bridge. An N-linked (GlcNAc...) asparagine glycan is attached at asparagine 323. Glutamate 376 (charge relay system) is an active-site residue. The N-linked (GlcNAc...) asparagine glycan is linked to asparagine 386. The active-site Charge relay system is the histidine 489. An N-linked (GlcNAc...) asparagine glycan is attached at asparagine 524.

The protein belongs to the type-B carboxylesterase/lipase family.

It is found in the secreted. The enzyme catalyses a carboxylic ester + H2O = an alcohol + a carboxylate + H(+). Its function is as follows. Secreted lipase that allows the use of hydrolyzed lipids as carbon sources. Has highest activity with methyl umbelliferyl oleate (C18:1), whereas much lower activities are obtained with the respective esters of palmitate (C16:0) and stearate (C18:0) (24% and 12% of the activity obtained with umbelliferyl oleate, respectively). Hydrolyzes 1- and 3-positioned ester bonds in preference to 2-positioned ester bonds. The production rate of monoglycerides is lower than that of diacylglycerides. Seems not required for the penetration of intact host tissue. The chain is Secreted lipase 1 from Botryotinia fuckeliana (strain B05.10) (Noble rot fungus).